Reading from the N-terminus, the 186-residue chain is Ran guanine nucleotide release factor (186 aa).

The segment at 27–70 (DLRPVPDHQEVFCHRVTDQSLIVELLELQAHVQGEEAARYHFED) is interaction with RAN.

The protein belongs to the MOG1 family. Monomer. Interacts with RAN, both RAN-GTP and RAN-GDP. Competes with RCC1 for a common binding site on RAN and thereby inhibits RCC1-mediated nucleotide exchange. Forms a complex with RAN-GTP and RANBP1. Interacts with the cytoplasmic loop 2 of SCN5A.

It is found in the nucleus. The protein resides in the cytoplasm. It localises to the perinuclear region. The protein localises to the cell membrane. Functionally, may regulate the intracellular trafficking of RAN. Promotes guanine nucleotide release from RAN and inhibits binding of new GTP by preventing the binding of the RAN guanine nucleotide exchange factor RCC1. Regulates the levels of GTP-bound RAN in the nucleus, and thereby plays a role in the regulation of RAN-dependent mitotic spindle dynamics. Enhances the expression of SCN5A at the cell membrane in cardiomyocytes. This is Ran guanine nucleotide release factor (RANGRF) from Bos taurus (Bovine).